The sequence spans 1222 residues: ATP-dependent helicase/nuclease subunit A (1222 aa).

Residues 39-495 (QKRTAQQIEA…ILLKENFRSQ (457 aa)) form the UvrD-like helicase ATP-binding domain. 60–67 (ASAGSGKT) is a binding site for ATP. Residues 524–810 (QLIAGSHAQT…NLMTIHKSKG (287 aa)) enclose the UvrD-like helicase C-terminal domain.

Belongs to the helicase family. AddA subfamily. As to quaternary structure, heterodimer of AddA and AddB/RexB. Mg(2+) is required as a cofactor.

The enzyme catalyses Couples ATP hydrolysis with the unwinding of duplex DNA by translocating in the 3'-5' direction.. The catalysed reaction is ATP + H2O = ADP + phosphate + H(+). In terms of biological role, the heterodimer acts as both an ATP-dependent DNA helicase and an ATP-dependent, dual-direction single-stranded exonuclease. Recognizes the chi site generating a DNA molecule suitable for the initiation of homologous recombination. The AddA nuclease domain is required for chi fragment generation; this subunit has the helicase and 3' -&gt; 5' nuclease activities. This chain is ATP-dependent helicase/nuclease subunit A, found in Streptococcus pyogenes serotype M28 (strain MGAS6180).